Reading from the N-terminus, the 87-residue chain is Large ribosomal subunit protein uL23c (87 aa).

Belongs to the universal ribosomal protein uL23 family. Part of the 50S ribosomal subunit.

It localises to the plastid. The protein resides in the chloroplast. Functionally, binds to 23S rRNA. In Bigelowiella natans (Pedinomonas minutissima), this protein is Large ribosomal subunit protein uL23c (rpl23).